Here is a 320-residue protein sequence, read N- to C-terminus: UDP-N-acetylenolpyruvoylglucosamine reductase (320 aa).

The 182-residue stretch at 35–216 folds into the FAD-binding PCMH-type domain; sequence RAGGPAQVLF…KQAMDEVQHH (182 aa). The active site involves arginine 181. The active-site Proton donor is the serine 230. Residue glutamate 300 is part of the active site.

It belongs to the MurB family. FAD serves as cofactor.

The protein resides in the cytoplasm. The enzyme catalyses UDP-N-acetyl-alpha-D-muramate + NADP(+) = UDP-N-acetyl-3-O-(1-carboxyvinyl)-alpha-D-glucosamine + NADPH + H(+). The protein operates within cell wall biogenesis; peptidoglycan biosynthesis. Its function is as follows. Cell wall formation. The chain is UDP-N-acetylenolpyruvoylglucosamine reductase from Brucella anthropi (strain ATCC 49188 / DSM 6882 / CCUG 24695 / JCM 21032 / LMG 3331 / NBRC 15819 / NCTC 12168 / Alc 37) (Ochrobactrum anthropi).